The chain runs to 261 residues: Cytochrome c oxidase subunit 3 (261 aa).

Over 1 to 15 the chain is Mitochondrial matrix; the sequence is MTHQTHAYHMVNPSP. Residues 16–33 form a helical membrane-spanning segment; that stretch reads WPLTGAFSALLLTSGLVM. The Mitochondrial intermembrane segment spans residues 34–38; the sequence is WFHYN. Residues 39-62 traverse the membrane as a helical segment; that stretch reads SITLLTLGLLTNILTMYQWWRDVI. Over 63–77 the chain is Mitochondrial matrix; it reads REGTYQGHHTPIVQK. A helical membrane pass occupies residues 78 to 99; the sequence is GLRYGMILFIVSEVFFFAGFFW. At 100–129 the chain is on the mitochondrial intermembrane side; the sequence is AFYHSSLVPTHDLGGCWPPTGISPLNPLEV. The helical transmembrane segment at 130–150 threads the bilayer; sequence PLLNTSVLLASGVSITWAHHS. At 151–156 the chain is on the mitochondrial matrix side; it reads LMEGKR. Residues 157 to 178 traverse the membrane as a helical segment; sequence NHMNQALLITIMLGLYFTILQA. Residues 179–198 are Mitochondrial intermembrane-facing; sequence SEYFETSFSISDGIYGSTFF. Residues 199 to 224 traverse the membrane as a helical segment; it reads MATGFHGLHVIIGSTFLIVCLLRQLK. The Mitochondrial matrix portion of the chain corresponds to 225–232; the sequence is FHFTSKHH. Residues 233–255 form a helical membrane-spanning segment; the sequence is FGFEAAAWYWHFVDVVWLFLYVS. Residues 256-261 are Mitochondrial intermembrane-facing; sequence IYWWGS.

It belongs to the cytochrome c oxidase subunit 3 family. As to quaternary structure, component of the cytochrome c oxidase (complex IV, CIV), a multisubunit enzyme composed of 14 subunits. The complex is composed of a catalytic core of 3 subunits MT-CO1, MT-CO2 and MT-CO3, encoded in the mitochondrial DNA, and 11 supernumerary subunits COX4I, COX5A, COX5B, COX6A, COX6B, COX6C, COX7A, COX7B, COX7C, COX8 and NDUFA4, which are encoded in the nuclear genome. The complex exists as a monomer or a dimer and forms supercomplexes (SCs) in the inner mitochondrial membrane with NADH-ubiquinone oxidoreductase (complex I, CI) and ubiquinol-cytochrome c oxidoreductase (cytochrome b-c1 complex, complex III, CIII), resulting in different assemblies (supercomplex SCI(1)III(2)IV(1) and megacomplex MCI(2)III(2)IV(2)).

The protein resides in the mitochondrion inner membrane. The catalysed reaction is 4 Fe(II)-[cytochrome c] + O2 + 8 H(+)(in) = 4 Fe(III)-[cytochrome c] + 2 H2O + 4 H(+)(out). Functionally, component of the cytochrome c oxidase, the last enzyme in the mitochondrial electron transport chain which drives oxidative phosphorylation. The respiratory chain contains 3 multisubunit complexes succinate dehydrogenase (complex II, CII), ubiquinol-cytochrome c oxidoreductase (cytochrome b-c1 complex, complex III, CIII) and cytochrome c oxidase (complex IV, CIV), that cooperate to transfer electrons derived from NADH and succinate to molecular oxygen, creating an electrochemical gradient over the inner membrane that drives transmembrane transport and the ATP synthase. Cytochrome c oxidase is the component of the respiratory chain that catalyzes the reduction of oxygen to water. Electrons originating from reduced cytochrome c in the intermembrane space (IMS) are transferred via the dinuclear copper A center (CU(A)) of subunit 2 and heme A of subunit 1 to the active site in subunit 1, a binuclear center (BNC) formed by heme A3 and copper B (CU(B)). The BNC reduces molecular oxygen to 2 water molecules using 4 electrons from cytochrome c in the IMS and 4 protons from the mitochondrial matrix. This is Cytochrome c oxidase subunit 3 (mt-Co3) from Mus musculus (Mouse).